The chain runs to 353 residues: Transcription factor MafA (353 aa).

At serine 14 the chain carries Phosphoserine. A Glycyl lysine isopeptide (Lys-Gly) (interchain with G-Cter in SUMO2) cross-link involves residue lysine 32. Disordered stretches follow at residues 40-108 (RFCH…GGTS) and 177-219 (ADDM…GAGH). The segment covering 46 to 73 (PPGSLSSTPLSTPCSSVPSSPSFCAPSP) has biased composition (low complexity). Phosphoserine is present on serine 49. Residues threonine 53 and threonine 57 each carry the phosphothreonine modification. Phosphoserine occurs at positions 61 and 65. The span at 74 to 93 (GTGGGGGAGGGGGSSQAGGA) shows a compositional bias: gly residues. A compositionally biased stretch (basic residues) spans 183–210 (GHHHGAHHAAHHHHAAHHHHHHHHHHGG). The interval 254–279 (RLKQKRRTLKNRGYAQSCRFKRVQQR) is basic motif. The bZIP domain occupies 254-317 (RLKQKRRTLK…DLYKEKYEKL (64 aa)). The leucine-zipper stretch occupies residues 282–303 (LESEKCQLQSQVEQLKLEVGRL). Positions 315 to 353 (EKLAGRGGPGSAGGAGFPREPSPPQAGPGGAKGTADFFL) are disordered. Residues 319–330 (GRGGPGSAGGAG) show a composition bias toward gly residues.

It belongs to the bZIP family. Maf subfamily. Forms homodimers or heterodimers. Monomers and dimers are able to bind DNA, but the off-rate is faster for monomers. Interacts with NEUROD1 and PDX1. May interact with MAFB, FOS, JUN and PCAF. Ubiquitinated, leading to its degradation by the proteasome. In terms of processing, phosphorylated at tyrosines. In terms of tissue distribution, expressed in the islets of Langerhans (at protein level).

The protein resides in the nucleus. Transcription factor that activates insulin gene expression. Acts synergistically with NEUROD1/BETA2 and PDX1. Binds the insulin enhancer C1/RIPE3b element. Binds to consensus TRE-type MARE 5'-TGCTGACTCAGCA-3' DNA sequence. This is Transcription factor MafA (MAFA) from Homo sapiens (Human).